Consider the following 400-residue polypeptide: Gap junction alpha-8 protein (400 aa).

Residues 2 to 12 lie within the membrane without spanning it; it reads GDWSFLGNILE. Residues 13 to 21 are Cytoplasmic-facing; it reads QVNEQSTVI. Residues 22 to 42 traverse the membrane as a helical segment; sequence GRVWLTVLFIFRILILGTAAE. The Extracellular segment spans residues 43 to 71; it reads LVWGDEQSDFVCNTQQPGCENVCYDEAFP. Cystine bridges form between C54–C196, C61–C190, and C65–C185. A helical membrane pass occupies residues 72–92; that stretch reads ISHIRLWVLQIIFVSTPSLVY. Over 93–156 the chain is Cytoplasmic; the sequence is FGHAVHHVRM…GTLLRTYILH (64 aa). Positions 104–118 are enriched in basic and acidic residues; it reads EKRKEREEAERRQQA. Positions 104 to 139 are disordered; the sequence is EKRKEREEAERRQQAEVDEEKLPLAPNQNKGNNPDG. Over residues 129–138 the composition is skewed to polar residues; it reads PNQNKGNNPD. A helical transmembrane segment spans residues 157 to 177; the sequence is IIFKTLFEVGFIVGQYFLYGF. Residues 178–205 are Extracellular-facing; the sequence is RILPLYRCGRWPCPNLVDCFVSRPTEKT. The chain crosses the membrane as a helical span at residues 206 to 226; it reads IFIMFMLVVAAVSLFLNLVEI. Over 227–400 the chain is Cytoplasmic; the sequence is SHLILKRIRR…SRARSDDLTV (174 aa). Residues 323 to 400 form a disordered region; it reads YAQAKEPEEE…SRARSDDLTV (78 aa). The span at 327-336 shows a compositional bias: basic and acidic residues; the sequence is KEPEEEKVKA. Residues 337–346 are compositionally biased toward acidic residues; that stretch reads EEEEEQEEEQ. S364 carries the phosphoserine; by CK2 modification. Low complexity predominate over residues 381-392; it reads RSLSRLSKASSR.

This sequence belongs to the connexin family. Alpha-type (group II) subfamily. As to quaternary structure, a hemichannel or connexon is composed of a hexamer of connexins. A functional gap junction is formed by the apposition of two hemichannels. Forms heteromeric channels with GJA3. During early stages of lens development, interacts with the C-terminus of MIP. Post-translationally, proteolytically cleaved by caspase-3 during lens development. Phosphorylated on Ser-364; which inhibits cleavage by caspase-3.

The protein resides in the cell membrane. It is found in the cell junction. Its subcellular location is the gap junction. Its function is as follows. Structural component of eye lens gap junctions. Gap junctions are dodecameric channels that connect the cytoplasm of adjoining cells. They are formed by the docking of two hexameric hemichannels, one from each cell membrane. Small molecules and ions diffuse from one cell to a neighboring cell via the central pore. The chain is Gap junction alpha-8 protein (GJA8) from Gallus gallus (Chicken).